The following is a 638-amino-acid chain: MTEKTIRLTTAQALVKFLNQQYIEVDGESAPFVDGIFTLFGHGNVVGIGQALEENPGHLKVYQGKNEQGMAHAAIAYAKQKNRKRIYACSTSAGPGSANLITAAGTAFANNLPVLFLPADTFATRQPDPVLQQLEHESSTAITTNDGFQAVSKYFDRVQRPEQLMSALIRAFEVMTNPVSAGPATICIAQDTEGEAFDYPVTFFQKRIHYLNRQIPTKRELTEAAKLIKASQTPVIIVGGGARYSDARKELIALSEQNDIPLVETHAGKSTVEFSFKNNLGGTGILGTLAANKIIHEADLVIGIGTRYTDFTTSSKTAFNPATKFININVSRMQTYKLDAFQVVGDAKATLIELTPLLKGYKTQFGDKISTYKKEWLKERTRLQHTKFNRDNFAPEIKNQFDQTTLNEYADSLQTEFTQTEALITINDTVAPDSIVVCSAGSLPGDLQRLWNPAVPNTYHLEYGYSCMGYEINGALGAKMAASDNQEVYSIVGDGSFCMSHSELLTSLQYGKKINIMLFDNSGFGCINNLQMANGSDSFFCEFRDNNNQIMQVDYAKIAEGYGAKVYKANTKEDLVNALEDAKKQTKTTLIDMKVLPKTMSEGYLNWWNVGVSEVSNKESITRAYEAKQINLKKARLY.

Residue E67 coordinates thiamine diphosphate. The thiamine pyrophosphate binding stretch occupies residues 442–523 (SLPGDLQRLW…INIMLFDNSG (82 aa)). D494 and N521 together coordinate Mg(2+).

It belongs to the TPP enzyme family. Requires Mg(2+) as cofactor. Thiamine diphosphate serves as cofactor.

It catalyses the reaction 3D-3,5/4-trihydroxycyclohexane-1,2-dione + H2O = 5-deoxy-D-glucuronate + H(+). Its pathway is polyol metabolism; myo-inositol degradation into acetyl-CoA; acetyl-CoA from myo-inositol: step 3/7. In terms of biological role, involved in the cleavage of the C1-C2 bond of 3D-(3,5/4)-trihydroxycyclohexane-1,2-dione (THcHDO) to yield 5-deoxy-glucuronate (5DG). The sequence is that of 3D-(3,5/4)-trihydroxycyclohexane-1,2-dione hydrolase from Listeria innocua serovar 6a (strain ATCC BAA-680 / CLIP 11262).